A 385-amino-acid polypeptide reads, in one-letter code: ATP phosphoribosyltransferase regulatory subunit (385 aa).

Belongs to the class-II aminoacyl-tRNA synthetase family. HisZ subfamily. In terms of assembly, heteromultimer composed of HisG and HisZ subunits.

It is found in the cytoplasm. Its pathway is amino-acid biosynthesis; L-histidine biosynthesis; L-histidine from 5-phospho-alpha-D-ribose 1-diphosphate: step 1/9. Functionally, required for the first step of histidine biosynthesis. May allow the feedback regulation of ATP phosphoribosyltransferase activity by histidine. The chain is ATP phosphoribosyltransferase regulatory subunit from Laribacter hongkongensis (strain HLHK9).